The following is a 191-amino-acid chain: A-type ATP synthase subunit E (191 aa).

This sequence belongs to the V-ATPase E subunit family. Has multiple subunits with at least A(3), B(3), C, D, E, F, H, I and proteolipid K(x).

Its subcellular location is the cell membrane. In terms of biological role, component of the A-type ATP synthase that produces ATP from ADP in the presence of a proton gradient across the membrane. This Methanoregula boonei (strain DSM 21154 / JCM 14090 / 6A8) protein is A-type ATP synthase subunit E.